A 394-amino-acid polypeptide reads, in one-letter code: Muscle cell intermediate filament protein AV71 (394 aa).

The segment at 1–73 (AEINLVRRRV…RVHDQEITEL (73 aa)) is coil 1B. The region spanning 1-239 (AEINLVRRRV…KMLEGEENRA (239 aa)) is the IF rod domain. The interval 74–91 (QAMAARDTTPENREYFKN) is linker 12. Positions 92–239 (ELSSAIRDIR…KMLEGEENRA (148 aa)) are coil 2. Positions 240-394 (GLRQLVEQVV…HIQRSSHTIN (155 aa)) are tail. Residues 272-389 (SRTSFQRSAK…EERASHIQRS (118 aa)) form the LTD domain.

This sequence belongs to the intermediate filament family.

The sequence is that of Muscle cell intermediate filament protein AV71 (AV71) from Acanthocheilonema viteae (Filarial nematode worm).